A 174-amino-acid chain; its full sequence is uncharacterized protein (174 aa).

The N-acetyltransferase domain occupies 42–174 (SNTKNINLYE…GVKGMFWYPR (133 aa)).

Belongs to the acetyltransferase family. Ycf52 subfamily.

Its subcellular location is the plastid. The protein resides in the chloroplast. This is an uncharacterized protein from Porphyra purpurea (Red seaweed).